Here is a 411-residue protein sequence, read N- to C-terminus: Arginine deiminase (411 aa).

The Amidino-cysteine intermediate role is filled by cysteine 401.

Belongs to the arginine deiminase family.

Its subcellular location is the cytoplasm. The catalysed reaction is L-arginine + H2O = L-citrulline + NH4(+). The protein operates within amino-acid degradation; L-arginine degradation via ADI pathway; carbamoyl phosphate from L-arginine: step 1/2. This Streptococcus equi subsp. equi (strain 4047) protein is Arginine deiminase.